We begin with the raw amino-acid sequence, 895 residues long: ABC-transporter-regulating transcription factor (895 aa).

Residues 69 to 96 (CDMCRKKKIKCDGKMPKCSHCTNYKTDC) constitute a DNA-binding region (zn(2)-C6 fungal-type). Residues 156 to 218 (HASGSNTPHN…QKESETEVEG (63 aa)) form a disordered region. The span at 158–207 (SGSNTPHNPQKINIPSQSQIAMSQQNSSSHYSTPRLESQSSPRTAATSPE) shows a compositional bias: polar residues. A helical membrane pass occupies residues 648-668 (CVWLILYYPVSALVTLFANIL). The disordered stretch occupies residues 726–813 (ESYSKKKRKS…TGVSTNIPPN (88 aa)). Positions 755 to 765 (PSTTQPTQAPS) are enriched in low complexity.

As to quaternary structure, interacts with ncaA.

The protein localises to the nucleus. It is found in the membrane. Its function is as follows. Transcription factor that regulates expression of the genes related to ergosterol biosynthesis, including erg3B, erg24A, erg25A, as well as cyp51A that encodes a target protein of azoles. In coordination with ffmA and ncaA, is responsible for the expression of the ABC transporter abcC/cdr1B/abcG1 related to azole resistance. Directly binds both the cyp51A and abcC/cdr1B/abcG1 promoters at a conserved 34 bp region called the atrR response element (ATRE). AtrR also binds to the promoter regions of both the sterol response transcription factor srbA and atrR genes themselves, the latter suggesting the possibility that atrR is autoregulated. Also regulates iron uptake, most likely via cooperation with SrbA. AtrR is necessary for hypoxia adaptation and virulence. This is ABC-transporter-regulating transcription factor from Aspergillus fumigatus (strain ATCC MYA-4609 / CBS 101355 / FGSC A1100 / Af293) (Neosartorya fumigata).